We begin with the raw amino-acid sequence, 314 residues long: Small glutamine-rich tetratricopeptide repeat-containing protein alpha (314 aa).

The interval 65-99 (ATASKEMPQDPRGPDRTPPSEEDSAEAERLKTEGN) is disordered. Residues 71–83 (MPQDPRGPDRTPP) are compositionally biased toward basic and acidic residues. The residue at position 81 (T81) is a Phosphothreonine. A Phosphoserine modification is found at S84. Over residues 90 to 99 (EAERLKTEGN) the composition is skewed to basic and acidic residues. TPR repeat units lie at residues 91–124 (AERL…NPAN), 125–158 (AVYF…DPGY), and 159–192 (SKAY…DPDN). K137 carries the N6-acetyllysine modification. The tract at residues 249-268 (GMISGGHNPLGTPGSSPQHS) is disordered. A Phosphoserine modification is found at S302. T304 carries the phosphothreonine modification. The residue at position 306 (S306) is a Phosphoserine.

The protein belongs to the SGT family. Homodimer. Homooligomer. Interacts with DNAJC5 and DNAJC5B. Interacts (via TPR repeats) with HSP90AA1. Interacts (via Gln-rich region) with SLC2A1. Interacts with HSP90AB1. Interacts (via TPR repeats) with HSPA8/Hsc70; the interaction is direct. Interacts with BAG6 (via ubiquitin-like domain); interaction prevents interaction between BAG6 and RNF126. Forms a multiprotein complex, at least composed of DNAJB12, DNAJB14, HSPA8/Hsc70 and SGTA; interaction with DNAJB14 and HSPA8/Hsc70 is direct. As to quaternary structure, (Microbial infection) Interacts with NS1 from parvovirus H-1. As to expression, ubiquitously expressed.

The protein localises to the cytoplasm. Its subcellular location is the nucleus. Its function is as follows. Co-chaperone that binds misfolded and hydrophobic patches-containing client proteins in the cytosol. Mediates their targeting to the endoplasmic reticulum but also regulates their sorting to the proteasome when targeting fails. Functions in tail-anchored/type II transmembrane proteins membrane insertion constituting with ASNA1 and the BAG6 complex a targeting module. Functions upstream of the BAG6 complex and ASNA1, binding more rapidly the transmembrane domain of newly synthesized proteins. It is also involved in the regulation of the endoplasmic reticulum-associated misfolded protein catabolic process via its interaction with BAG6: collaborates with the BAG6 complex to maintain hydrophobic substrates in non-ubiquitinated states. Competes with RNF126 for interaction with BAG6, preventing the ubiquitination of client proteins associated with the BAG6 complex. Binds directly to HSC70 and HSP70 and regulates their ATPase activity. In Rattus norvegicus (Rat), this protein is Small glutamine-rich tetratricopeptide repeat-containing protein alpha (Sgta).